Here is a 712-residue protein sequence, read N- to C-terminus: Polyribonucleotide nucleotidyltransferase (712 aa).

Residues Asp493 and Asp499 each coordinate Mg(2+). Residues 560 to 619 form the KH domain; it reads PRLLTFKVDPEDIGKIIGPGGKMVRSITEATGAKVDISDDGTITVSSSVGGQAEAARAMI. Residues 629–697 form the S1 motif domain; sequence GQVYLGKVTR…HKGRVNLTRL (69 aa).

Belongs to the polyribonucleotide nucleotidyltransferase family. Mg(2+) serves as cofactor.

Its subcellular location is the cytoplasm. The enzyme catalyses RNA(n+1) + phosphate = RNA(n) + a ribonucleoside 5'-diphosphate. Its function is as follows. Involved in mRNA degradation. Catalyzes the phosphorolysis of single-stranded polyribonucleotides processively in the 3'- to 5'-direction. In Synechococcus sp. (strain JA-3-3Ab) (Cyanobacteria bacterium Yellowstone A-Prime), this protein is Polyribonucleotide nucleotidyltransferase.